Consider the following 276-residue polypeptide: NH(3)-dependent NAD(+) synthetase (276 aa).

43-50 is a binding site for ATP; sequence GISGGVDS. Position 49 (Asp-49) interacts with Mg(2+). Residue Arg-146 coordinates deamido-NAD(+). Thr-166 is an ATP binding site. Glu-171 contacts Mg(2+). Residues Lys-179 and Asp-186 each contribute to the deamido-NAD(+) site. ATP contacts are provided by Lys-195 and Thr-217. A deamido-NAD(+)-binding site is contributed by 266–267; it reads HK.

It belongs to the NAD synthetase family. As to quaternary structure, homodimer.

The enzyme catalyses deamido-NAD(+) + NH4(+) + ATP = AMP + diphosphate + NAD(+) + H(+). The protein operates within cofactor biosynthesis; NAD(+) biosynthesis; NAD(+) from deamido-NAD(+) (ammonia route): step 1/1. Functionally, catalyzes the ATP-dependent amidation of deamido-NAD to form NAD. Uses ammonia as a nitrogen source. The chain is NH(3)-dependent NAD(+) synthetase from Shewanella amazonensis (strain ATCC BAA-1098 / SB2B).